Here is a 332-residue protein sequence, read N- to C-terminus: MLIAQRPTLTEENISEFRSRFVIEPLEPGFGYTLGNSLRRTLLSSIPGAAVTSIRIDGVLHEFSTVPGVKEDVTEIILNIKGLVVSSEHDEPITAYLRKTGAGQVTAADISAPAGVEIHNPELVIATLNDKAKFEVELTIERGRGYVSAQQNRNEYSEAGQIPIDSIYSPVLKVTYRVEATRAGERTDFDRLVVDVETKPAISPRDAIASAGRTLVELFGLARELNSAAEGIEIGPAPVDQVLSSELSMPIEDLDLSVRSYNCLKREGINTVSELVSLSETQLMNIRNFGQKSVDEVKDKLTEMGLSLKDSVPGFDGAHFYSGYDEDESTTI.

The interval 1–226 is alpha N-terminal domain (alpha-NTD); it reads MLIAQRPTLT…ELFGLARELN (226 aa). The interval 243–332 is alpha C-terminal domain (alpha-CTD); that stretch reads LSSELSMPIE…GYDEDESTTI (90 aa).

The protein belongs to the RNA polymerase alpha chain family. Homodimer. The RNAP catalytic core consists of 2 alpha, 1 beta, 1 beta' and 1 omega subunit. When a sigma factor is associated with the core the holoenzyme is formed, which can initiate transcription.

It catalyses the reaction RNA(n) + a ribonucleoside 5'-triphosphate = RNA(n+1) + diphosphate. In terms of biological role, DNA-dependent RNA polymerase catalyzes the transcription of DNA into RNA using the four ribonucleoside triphosphates as substrates. This chain is DNA-directed RNA polymerase subunit alpha, found in Leifsonia xyli subsp. xyli (strain CTCB07).